Reading from the N-terminus, the 157-residue chain is SsrA-binding protein (157 aa).

The protein belongs to the SmpB family.

It localises to the cytoplasm. Functionally, required for rescue of stalled ribosomes mediated by trans-translation. Binds to transfer-messenger RNA (tmRNA), required for stable association of tmRNA with ribosomes. tmRNA and SmpB together mimic tRNA shape, replacing the anticodon stem-loop with SmpB. tmRNA is encoded by the ssrA gene; the 2 termini fold to resemble tRNA(Ala) and it encodes a 'tag peptide', a short internal open reading frame. During trans-translation Ala-aminoacylated tmRNA acts like a tRNA, entering the A-site of stalled ribosomes, displacing the stalled mRNA. The ribosome then switches to translate the ORF on the tmRNA; the nascent peptide is terminated with the 'tag peptide' encoded by the tmRNA and targeted for degradation. The ribosome is freed to recommence translation, which seems to be the essential function of trans-translation. The polypeptide is SsrA-binding protein (Chlorobium phaeovibrioides (strain DSM 265 / 1930) (Prosthecochloris vibrioformis (strain DSM 265))).